The following is a 239-amino-acid chain: Pyridoxine 5'-phosphate synthase (239 aa).

N7 is a 3-amino-2-oxopropyl phosphate binding site. 9–10 (DH) is a 1-deoxy-D-xylulose 5-phosphate binding site. Position 18 (R18) interacts with 3-amino-2-oxopropyl phosphate. H43 acts as the Proton acceptor in catalysis. The 1-deoxy-D-xylulose 5-phosphate site is built by R45 and H50. The active-site Proton acceptor is the E70. A 1-deoxy-D-xylulose 5-phosphate-binding site is contributed by T100. The active-site Proton donor is H191. Residues G192 and 213–214 (GH) contribute to the 3-amino-2-oxopropyl phosphate site.

It belongs to the PNP synthase family. As to quaternary structure, homooctamer; tetramer of dimers.

The protein localises to the cytoplasm. The enzyme catalyses 3-amino-2-oxopropyl phosphate + 1-deoxy-D-xylulose 5-phosphate = pyridoxine 5'-phosphate + phosphate + 2 H2O + H(+). Its pathway is cofactor biosynthesis; pyridoxine 5'-phosphate biosynthesis; pyridoxine 5'-phosphate from D-erythrose 4-phosphate: step 5/5. Catalyzes the complicated ring closure reaction between the two acyclic compounds 1-deoxy-D-xylulose-5-phosphate (DXP) and 3-amino-2-oxopropyl phosphate (1-amino-acetone-3-phosphate or AAP) to form pyridoxine 5'-phosphate (PNP) and inorganic phosphate. The protein is Pyridoxine 5'-phosphate synthase of Citrifermentans bemidjiense (strain ATCC BAA-1014 / DSM 16622 / JCM 12645 / Bem) (Geobacter bemidjiensis).